Consider the following 474-residue polypeptide: MESYSPSIQKLCVFLKPESDISNTGISYLNNFLADMSNAIIVESIHSSKSHKHKTILIEDIESALNVVFPSEIADSIINQSKGRIQSTSLKNLMQVKTFNNGGNNNNNNEQDNDLQEKEQNELSDDSDVEGFEIIPNNNNIYSHDVSLCFPIDLVCRVTLDYICRKKVIHQNPSDFYKVIEQQQSNHVIYTYISYALEVITTKILIKISSSTDLIDEDIIRKVIQDNHHLNSVRHKNIQASNIAGKLLDSSSSSNSNLQTSLSSSFIFSSSSNNTTTFTQQEQQEQFNDDKISGDEIEFEINNSKYLEKEDKKDQLIQKDEEIILKTFNDNNNNNNNNNNNNNNNNNNNNNNININNDNDNNNNNNKNNDNKNYDNNNNNNADKIEKLSPVNNNVKNSEIEKNIEKLKNINNNNNVEINEALISIIKETCKNIPSSSFSSVKNLKRSPPSLFKFKEPIDLVQVLAEGGIHMEAT.

Disordered regions lie at residues 99–123, 276–295, and 328–394; these read FNNG…QNEL, TTFT…ISGD, and FNDN…VNNN. Low complexity-rich tracts occupy residues 100 to 110, 276 to 286, and 329 to 368; these read NNGGNNNNNNE, TTFTQQEQQEQ, and NDNN…NNKN.

It belongs to the histone H2B family.

This chain is Histone H2B.v2 (H2Bv2), found in Dictyostelium discoideum (Social amoeba).